Reading from the N-terminus, the 702-residue chain is NAD(P)H-quinone oxidoreductase subunit 5, chloroplastic (702 aa).

Transmembrane regions (helical) follow at residues 1 to 21 (WVIP…LFFI), 31 to 51 (IWAF…VHLS), 81 to 101 (IDPL…LVLI), 117 to 137 (FVYI…SNLI), 139 to 159 (IYFF…FWFT), 177 to 197 (GDFG…SLEF), 211 to 231 (NGIN…GAVA), 250 to 270 (TPIS…FLLA), 272 to 292 (LFPL…VGTI), 319 to 339 (LGYM…FHLI), 346 to 366 (ALLF…VGYS), 388 to 408 (TTFL…CFWS), 417 to 437 (WLYS…TAFY), 534 to 554 (LFPL…GISF), and 602 to 622 (SLAI…YSFF).

This sequence belongs to the complex I subunit 5 family. In terms of assembly, NDH is composed of at least 16 different subunits, 5 of which are encoded in the nucleus.

It is found in the plastid. The protein localises to the chloroplast thylakoid membrane. It carries out the reaction a plastoquinone + NADH + (n+1) H(+)(in) = a plastoquinol + NAD(+) + n H(+)(out). The catalysed reaction is a plastoquinone + NADPH + (n+1) H(+)(in) = a plastoquinol + NADP(+) + n H(+)(out). Functionally, NDH shuttles electrons from NAD(P)H:plastoquinone, via FMN and iron-sulfur (Fe-S) centers, to quinones in the photosynthetic chain and possibly in a chloroplast respiratory chain. The immediate electron acceptor for the enzyme in this species is believed to be plastoquinone. Couples the redox reaction to proton translocation, and thus conserves the redox energy in a proton gradient. The chain is NAD(P)H-quinone oxidoreductase subunit 5, chloroplastic (ndhF) from Poa pratensis (Kentucky bluegrass).